Reading from the N-terminus, the 152-residue chain is Large ribosomal subunit protein uL15 (152 aa).

The disordered stretch occupies residues methionine 1–proline 56. The segment covering arginine 21 to serine 31 has biased composition (gly residues). Residues arginine 33 to tyrosine 44 show a composition bias toward basic residues.

The protein belongs to the universal ribosomal protein uL15 family. As to quaternary structure, part of the 50S ribosomal subunit.

Binds to the 23S rRNA. The chain is Large ribosomal subunit protein uL15 from Amoebophilus asiaticus (strain 5a2).